Here is a 420-residue protein sequence, read N- to C-terminus: UDP-glucuronic acid decarboxylase 1 (420 aa).

Met1 bears the N-acetylmethionine mark. The Cytoplasmic segment spans residues 1–19 (MVSKGLLRLVSSVNRRRMK). The helical; Signal-anchor for type II membrane protein transmembrane segment at 20 to 40 (LLLGIALFAYAASVWGNFVNM) threads the bilayer. At 41-420 (RSIQENGELK…RVKKGRTRHS (380 aa)) the chain is on the lumenal side. Residue Thr94 is modified to Phosphothreonine. Gly98, Phe99, Val100, Asp119, Asn120, Phe122, Thr123, Gly124, Asp144, and Val145 together coordinate NAD(+). Residues Leu149 and Tyr150 each contribute to the UDP-alpha-D-glucuronate site. Residues Leu159 and Ser161 each coordinate NAD(+). Lys177 is a binding site for UDP-alpha-D-glucuronate. An NAD(+)-binding site is contributed by Thr178. Residues Asn185, Gly188, Lys191, and Arg192 each contribute to the UDP-alpha-D-glucuronate site. Residues Ala200, Tyr231, and Lys235 each coordinate NAD(+). Catalysis depends on Tyr231, which acts as the Proton acceptor. 3 residues coordinate UDP-alpha-D-glucuronate: Tyr245, Gln248, and Glu249. NAD(+) is bound by residues Thr261, His267, and Arg272. Residue Asn316 is glycosylated (N-linked (GlcNAc...) asparagine).

It belongs to the NAD(P)-dependent epimerase/dehydratase family. UDP-glucuronic acid decarboxylase subfamily. In terms of assembly, homodimer and homotetramer. Interacts with AKT1. The cofactor is NAD(+).

Its subcellular location is the golgi apparatus. The protein resides in the golgi stack membrane. The catalysed reaction is UDP-alpha-D-glucuronate + H(+) = UDP-alpha-D-xylose + CO2. Its pathway is nucleotide-sugar biosynthesis; UDP-alpha-D-xylose biosynthesis; UDP-alpha-D-xylose from UDP-alpha-D-glucuronate: step 1/1. Functionally, catalyzes the NAD-dependent decarboxylation of UDP-glucuronic acid to UDP-xylose. Necessary for the biosynthesis of the core tetrasaccharide in glycosaminoglycan biosynthesis. This chain is UDP-glucuronic acid decarboxylase 1 (Uxs1), found in Mus musculus (Mouse).